The following is a 1371-amino-acid chain: Soluble scavenger receptor cysteine-rich domain-containing protein SSC5D (1371 aa).

A signal peptide spans 1–16 (MRGLACLLAMLVGIQA). The region spanning 20–120 (LRLADGPHGC…HEEDAGVVCV (101 aa)) is the SRCR 1 domain. 3 disulfide bridges follow: C45-C109, C58-C119, and C89-C99. The span at 143–154 (LSGELSPSSEEP) shows a compositional bias: low complexity. Residues 143 to 200 (LSGELSPSSEEPPITHAPQPAASSQNGPRKKNPRPPKQTKSTRAPVLTNGAPHQERLR) form a disordered region. 2 consecutive SRCR domains span residues 199–299 (LRLV…LVCT) and 305–405 (IRLA…AVCD). 6 cysteine pairs are disulfide-bonded: C224/C288, C237/C298, C268/C278, C330/C394, C343/C404, and C374/C384. Residues N377 and N422 are each glycosylated (N-linked (GlcNAc...) asparagine). The segment at 431 to 466 (TSVGQMPGPAGPWPPSASPTAPPEPGPEAGSPQLRL) is disordered. The segment covering 439–456 (PAGPWPPSASPTAPPEPG) has biased composition (pro residues). Residues 464–565 (LRLVAGPSRC…HNEDVGVTCT (102 aa)) enclose the SRCR 4 domain. 3 disulfides stabilise this stretch: C489/C554, C502/C564, and C534/C544. A disordered region spans residues 592 to 756 (WLPGELTTKP…AGVPVPSGPF (165 aa)). The segment covering 599–611 (TKPSASLTSSVPQ) has biased composition (polar residues). Residues 622–633 (KSTKKWVTKNAR) are compositionally biased toward basic residues. The segment covering 653-663 (TPTSLHPTART) has biased composition (polar residues). Residues 665 to 676 (ELPKRLTTEAPH) are compositionally biased toward basic and acidic residues. Residues 698 to 740 (PVVSQSTQGPQEVTSEATTTENPQTSLEPSGENTEGSLESSQD) show a composition bias toward polar residues. Residues 741–755 (PATTPTAGVPVPSGP) are compositionally biased toward low complexity. The 101-residue stretch at 758–858 (VRLADGPNRC…HEEDVVLTCT (101 aa)) folds into the SRCR 5 domain. Disulfide bonds link C783-C847, C796-C857, and C827-C837. Disordered stretches follow at residues 888–1270 (RPGH…PFGP) and 1351–1371 (STPV…RGDV). Polar residues predominate over residues 894–912 (SWATTTNTEVPSPATQNLP). Low complexity-rich tracts occupy residues 936 to 957 (KGTP…KSPG), 981 to 1004 (PTSA…RQTS), and 1018 to 1035 (GTSS…LPSP). Composition is skewed to polar residues over residues 1039–1086 (ALST…TSEL) and 1102–1148 (SSDS…NPQQ). N-linked (GlcNAc...) asparagine glycans are attached at residues N1044 and N1131. The segment covering 1149–1163 (PRSPHPATSPQPPTN) has biased composition (pro residues). The span at 1164–1189 (THPSSTPATPTESLPSSRKTELSSPT) shows a compositional bias: polar residues. Low complexity predominate over residues 1218 to 1230 (ASESGPSSPSPAS). Polar residues predominate over residues 1244–1261 (RSQTLHSASDHLTQGPTP).

As to quaternary structure, interacts with LGALS1 and laminin. Post-translationally, partially N- and O-glycosylated. Detected throughout the gastrointestinal and genitourinary tracts, in serosal salivary gland, the exocrine part of pancreas and testis, as well as in a few tubular structures in kidney. Not detected in lung and heart (at protein level). Strongly expressed in testis, kidney and pancreas, with lower levels detected in bone marrow, spleen, lung, liver, colon, stomach and skeletal muscle. Very low levels or no expression detected in thymus, esophagus, jejunum, ileum, duodenum, ovary, uterus, heart, trachea, brain, cerebellum and bladder.

Its subcellular location is the secreted. The protein resides in the cytoplasm. Its function is as follows. Binds to extracellular matrix proteins. Binds to pathogen-associated molecular patterns (PAMPs) present on the cell walls of Gram-positive and Gram-negative bacteria and fungi, behaving as a pattern recognition receptor (PRR). Induces bacterial and fungal aggregation and subsequent inhibition of PAMP-induced cytokine release. Does not possess intrinsic bactericidal activity. May play a role in the innate defense and homeostasis of certain epithelial surfaces. The sequence is that of Soluble scavenger receptor cysteine-rich domain-containing protein SSC5D (Ssc5d) from Mus musculus (Mouse).